The sequence spans 128 residues: Large ribosomal subunit protein bL19 (128 aa).

It belongs to the bacterial ribosomal protein bL19 family.

Functionally, this protein is located at the 30S-50S ribosomal subunit interface and may play a role in the structure and function of the aminoacyl-tRNA binding site. The protein is Large ribosomal subunit protein bL19 of Herminiimonas arsenicoxydans.